Here is a 303-residue protein sequence, read N- to C-terminus: RELT-like protein 2 (303 aa).

The chain crosses the membrane as a helical span at residues 15 to 35; the sequence is LYMLFLLVLVFFLMGLVGFMI. 2 disordered regions span residues 46 to 67 and 132 to 303; these read CRTSRGSEPDDAQLQPPEDDDM and CLHC…AGSM. Ser52 is subject to Phosphoserine. 2 stretches are compositionally biased toward basic and acidic residues: residues 148–158 and 172–188; these read RSKEGKSRPRT and THIEKRYGLHEHRDGSP. Residues 194 to 212 show a composition bias toward gly residues; it reads GSGGGQDPGGGQGSGGGQP. Polar residues predominate over residues 278-296; the sequence is QEANGQPSKPDTSDHQVSL.

It belongs to the RELT family. Interacts with RELT, RELL1 and OXSR1. Interacts with PLSCR1. Interacts with TRAF2. In terms of processing, phosphorylated in vitro by OXSR1. As to expression, primarily expressed in spleen, thymus, testis, peripheral blood leukocytes, brain and placenta. Not detected in prostate, ovary, small intestine, colon, heart, lung, liver, skeletal muscle, kidney and pancreas.

It localises to the cell membrane. Functionally, induces activation of MAPK14/p38 cascade, when overexpressed. Induces apoptosis, when overexpressed. The polypeptide is RELT-like protein 2 (RELL2) (Homo sapiens (Human)).